The sequence spans 358 residues: UDP-N-acetylglucosamine--N-acetylmuramyl-(pentapeptide) pyrophosphoryl-undecaprenol N-acetylglucosamine transferase (358 aa).

UDP-N-acetyl-alpha-D-glucosamine contacts are provided by residues Thr12–Gly14, Asn124, Arg162, Ser185, Ile242, Ala261–Glu266, and Gln287.

The protein belongs to the glycosyltransferase 28 family. MurG subfamily.

It is found in the cell inner membrane. The catalysed reaction is di-trans,octa-cis-undecaprenyl diphospho-N-acetyl-alpha-D-muramoyl-L-alanyl-D-glutamyl-meso-2,6-diaminopimeloyl-D-alanyl-D-alanine + UDP-N-acetyl-alpha-D-glucosamine = di-trans,octa-cis-undecaprenyl diphospho-[N-acetyl-alpha-D-glucosaminyl-(1-&gt;4)]-N-acetyl-alpha-D-muramoyl-L-alanyl-D-glutamyl-meso-2,6-diaminopimeloyl-D-alanyl-D-alanine + UDP + H(+). The protein operates within cell wall biogenesis; peptidoglycan biosynthesis. Functionally, cell wall formation. Catalyzes the transfer of a GlcNAc subunit on undecaprenyl-pyrophosphoryl-MurNAc-pentapeptide (lipid intermediate I) to form undecaprenyl-pyrophosphoryl-MurNAc-(pentapeptide)GlcNAc (lipid intermediate II). In Pseudoalteromonas translucida (strain TAC 125), this protein is UDP-N-acetylglucosamine--N-acetylmuramyl-(pentapeptide) pyrophosphoryl-undecaprenol N-acetylglucosamine transferase.